The following is a 338-amino-acid chain: Ketol-acid reductoisomerase (NADP(+)) (338 aa).

In terms of domain architecture, KARI N-terminal Rossmann spans 1–181; it reads MKVFYDKDCD…GGGRTGIIET (181 aa). Residues 24-27, Arg-47, Ser-50, Thr-52, and 82-85 contribute to the NADP(+) site; these read YGSQ and DEFQ. His-107 is a catalytic residue. Residue Gly-133 coordinates NADP(+). The 146-residue stretch at 182-327 folds into the KARI C-terminal knotted domain; sequence TFKDETETDL…EQLRSMMPWI (146 aa). Mg(2+) contacts are provided by Asp-190, Glu-194, Glu-226, and Glu-230. Substrate is bound at residue Ser-251.

Belongs to the ketol-acid reductoisomerase family. Requires Mg(2+) as cofactor.

It catalyses the reaction (2R)-2,3-dihydroxy-3-methylbutanoate + NADP(+) = (2S)-2-acetolactate + NADPH + H(+). It carries out the reaction (2R,3R)-2,3-dihydroxy-3-methylpentanoate + NADP(+) = (S)-2-ethyl-2-hydroxy-3-oxobutanoate + NADPH + H(+). Its pathway is amino-acid biosynthesis; L-isoleucine biosynthesis; L-isoleucine from 2-oxobutanoate: step 2/4. It participates in amino-acid biosynthesis; L-valine biosynthesis; L-valine from pyruvate: step 2/4. In terms of biological role, involved in the biosynthesis of branched-chain amino acids (BCAA). Catalyzes an alkyl-migration followed by a ketol-acid reduction of (S)-2-acetolactate (S2AL) to yield (R)-2,3-dihydroxy-isovalerate. In the isomerase reaction, S2AL is rearranged via a Mg-dependent methyl migration to produce 3-hydroxy-3-methyl-2-ketobutyrate (HMKB). In the reductase reaction, this 2-ketoacid undergoes a metal-dependent reduction by NADPH to yield (R)-2,3-dihydroxy-isovalerate. In Pseudomonas entomophila (strain L48), this protein is Ketol-acid reductoisomerase (NADP(+)).